Consider the following 557-residue polypeptide: NADP-dependent malic enzyme (557 aa).

Tyr91 serves as the catalytic Proton donor. NADP(+) is bound at residue Arg144. Catalysis depends on Lys162, which acts as the Proton acceptor. Residues Glu234, Asp235, and Asp258 each coordinate a divalent metal cation. NADP(+) is bound by residues Asp258, Gly290–Glu307, and Asn397.

It belongs to the malic enzymes family. In terms of assembly, homotetramer. It depends on Mg(2+) as a cofactor. Requires Mn(2+) as cofactor.

The protein localises to the cytoplasm. The catalysed reaction is (S)-malate + NADP(+) = pyruvate + CO2 + NADPH. The enzyme catalyses oxaloacetate + H(+) = pyruvate + CO2. In Anas platyrhynchos (Mallard), this protein is NADP-dependent malic enzyme (ME1).